A 362-amino-acid polypeptide reads, in one-letter code: MAQVFNFSSGPAMLPAEVLKLAQQDLRDWHGLGTSVMEISHRGKEFIQVAEEAEQDFRDLLSIPSNYKVLFCHGGGRGQFAAIPLNILGDKTSADYVDAGYWAASAIKEAKKYCSPNVIDAKVTVDGLRAVKPMSEWQLSDNAAYVHYCPNETIDGIAIDETPNFGSDVVVAADFSSTILSAPLDVSRYGVIYAGAQKNIGPAGLTIVIVREDLLGKANIACPSILDYTVLNDNDSMFNTPPTFAWYLSGLVFKWLKAQGGVAAMNKINQQKAELLYGVIDNSDFYRNDVAKSNRSRMNVPFQLADSALDKVFLEESFAAGLHALKGHRVVGGMRASIYNAMPLEGVKALTDFMVDFERRHG.

Ser-9 and Arg-42 together coordinate L-glutamate. Pyridoxal 5'-phosphate contacts are provided by residues Gly-76 to Arg-77, Trp-102, Thr-153, Asp-174, and Gln-197. At Lys-198 the chain carries N6-(pyridoxal phosphate)lysine. Position 239–240 (Asn-239–Thr-240) interacts with pyridoxal 5'-phosphate.

The protein belongs to the class-V pyridoxal-phosphate-dependent aminotransferase family. SerC subfamily. In terms of assembly, homodimer. Pyridoxal 5'-phosphate serves as cofactor.

Its subcellular location is the cytoplasm. The catalysed reaction is O-phospho-L-serine + 2-oxoglutarate = 3-phosphooxypyruvate + L-glutamate. It catalyses the reaction 4-(phosphooxy)-L-threonine + 2-oxoglutarate = (R)-3-hydroxy-2-oxo-4-phosphooxybutanoate + L-glutamate. It functions in the pathway amino-acid biosynthesis; L-serine biosynthesis; L-serine from 3-phospho-D-glycerate: step 2/3. The protein operates within cofactor biosynthesis; pyridoxine 5'-phosphate biosynthesis; pyridoxine 5'-phosphate from D-erythrose 4-phosphate: step 3/5. In terms of biological role, catalyzes the reversible conversion of 3-phosphohydroxypyruvate to phosphoserine and of 3-hydroxy-2-oxo-4-phosphonooxybutanoate to phosphohydroxythreonine. The sequence is that of Phosphoserine aminotransferase from Citrobacter koseri (strain ATCC BAA-895 / CDC 4225-83 / SGSC4696).